A 727-amino-acid chain; its full sequence is Procollagen-lysine,2-oxoglutarate 5-dioxygenase 1 (727 aa).

Positions 1–18 are cleaved as a signal peptide; it reads MRPLLLLAPLGWLLLAEA. N-linked (GlcNAc...) asparagine glycans are attached at residues N163, N197, and N538. Residues 636-727 form the Fe2OG dioxygenase domain; sequence QFDLAFVVRY…RYIAVSFVDP (92 aa). Fe cation-binding residues include H656 and D658. N-linked (GlcNAc...) asparagine glycosylation is present at N686. H708 contacts Fe cation. R718 is a catalytic residue.

Homodimer. Identified in a complex with P3H3 and P3H4. Fe(2+) serves as cofactor. The cofactor is L-ascorbate.

The protein resides in the rough endoplasmic reticulum membrane. It carries out the reaction L-lysyl-[collagen] + 2-oxoglutarate + O2 = (5R)-5-hydroxy-L-lysyl-[collagen] + succinate + CO2. In terms of biological role, part of a complex composed of PLOD1, P3H3 and P3H4 that catalyzes hydroxylation of lysine residues in collagen alpha chains and is required for normal assembly and cross-linkling of collagen fibrils. Forms hydroxylysine residues in -Xaa-Lys-Gly- sequences in collagens. These hydroxylysines serve as sites of attachment for carbohydrate units and are essential for the stability of the intermolecular collagen cross-links. This Pongo abelii (Sumatran orangutan) protein is Procollagen-lysine,2-oxoglutarate 5-dioxygenase 1 (PLOD1).